The following is a 579-amino-acid chain: 2-succinyl-5-enolpyruvyl-6-hydroxy-3-cyclohexene-1-carboxylate synthase (579 aa).

The protein belongs to the TPP enzyme family. MenD subfamily. As to quaternary structure, homodimer. It depends on Mg(2+) as a cofactor. Mn(2+) serves as cofactor. Thiamine diphosphate is required as a cofactor.

It carries out the reaction isochorismate + 2-oxoglutarate + H(+) = 5-enolpyruvoyl-6-hydroxy-2-succinyl-cyclohex-3-ene-1-carboxylate + CO2. It functions in the pathway quinol/quinone metabolism; 1,4-dihydroxy-2-naphthoate biosynthesis; 1,4-dihydroxy-2-naphthoate from chorismate: step 2/7. The protein operates within quinol/quinone metabolism; menaquinone biosynthesis. Its function is as follows. Catalyzes the thiamine diphosphate-dependent decarboxylation of 2-oxoglutarate and the subsequent addition of the resulting succinic semialdehyde-thiamine pyrophosphate anion to isochorismate to yield 2-succinyl-5-enolpyruvyl-6-hydroxy-3-cyclohexene-1-carboxylate (SEPHCHC). This is 2-succinyl-5-enolpyruvyl-6-hydroxy-3-cyclohexene-1-carboxylate synthase from Oceanobacillus iheyensis (strain DSM 14371 / CIP 107618 / JCM 11309 / KCTC 3954 / HTE831).